A 353-amino-acid chain; its full sequence is tRNA-specific 2-thiouridylase MnmA 2 (353 aa).

Residues 9–16 (AMSGGVDS) and Met-35 each bind ATP. Cys-98 (nucleophile) is an active-site residue. Cys-98 and Cys-194 form a disulfide bridge. Gly-122 contacts ATP. The interval 144–146 (KDQ) is interaction with tRNA. Cys-194 (cysteine persulfide intermediate) is an active-site residue. The tract at residues 300-301 (RY) is interaction with tRNA.

Belongs to the MnmA/TRMU family.

The protein resides in the cytoplasm. The enzyme catalyses S-sulfanyl-L-cysteinyl-[protein] + uridine(34) in tRNA + AH2 + ATP = 2-thiouridine(34) in tRNA + L-cysteinyl-[protein] + A + AMP + diphosphate + H(+). Catalyzes the 2-thiolation of uridine at the wobble position (U34) of tRNA, leading to the formation of s(2)U34. This chain is tRNA-specific 2-thiouridylase MnmA 2, found in Clostridium botulinum (strain ATCC 19397 / Type A).